A 123-amino-acid polypeptide reads, in one-letter code: MKKNFRVKREKDFKAIFKEGTSFANRKFVVYQLENQKNHFRVGLSVSKKLGNAVTRNQIKRRIRHIIQNAKGSLVEDVDFVVIARKGVETLGYAEMEKNLLHVLKLSKIYQEGNGSEKETKVD.

The protein belongs to the RnpA family. Consists of a catalytic RNA component (M1 or rnpB) and a protein subunit.

The enzyme catalyses Endonucleolytic cleavage of RNA, removing 5'-extranucleotides from tRNA precursor.. RNaseP catalyzes the removal of the 5'-leader sequence from pre-tRNA to produce the mature 5'-terminus. It can also cleave other RNA substrates such as 4.5S RNA. The protein component plays an auxiliary but essential role in vivo by binding to the 5'-leader sequence and broadening the substrate specificity of the ribozyme. The polypeptide is Ribonuclease P protein component (Streptococcus pneumoniae (strain Hungary19A-6)).